An 878-amino-acid polypeptide reads, in one-letter code: Enoyl-CoA isomerase/hydratase claC (878 aa).

The disordered stretch occupies residues 541 to 561; sequence VGPASTEATSPVVEPSTMESD. Substrate-binding positions include 677–681 and Gly724; that span reads AGADL.

It belongs to the enoyl-CoA hydratase/isomerase family.

It functions in the pathway secondary metabolite biosynthesis. Functionally, enoyl-CoA isomerase/hydratase; part of the cla gene cluster that produces clavatol and ortho-quinone methide. The clavatol biosynthesis cluster cla and the terrestric acid cluster tra are both involved in the production of peniphenones and penilactones. The non-reducing PKS claF is responsible for the formation of clavatol from successive condensations of 3 malonyl-CoA units, presumably with a simple acetyl-CoA starter unit, and 2 methylation steps. The esterase claE probably collaborates with claF by catalyzing the hydrolysis of ACP-bound acyl intermediates to free the ACP from stalled intermediates. The clavatol oxidase claD then converts clavatol to hydroxyclavatol. Spontaneous dehydration of hydroxyclavatol leads to the accumulation of the highly active ortho-quinone methide. On the other hand, the PKS-NRPS hybrid traA is involved in the formation of crustosic acid, with the help of traB and traD. The polyketide synthase module (PKS) of traA is responsible for the synthesis of the polyketide backbone via the condensation of an acetyl-CoA starter unit with 3 malonyl-CoA units. The downstream nonribosomal peptide synthetase (NRPS) module then amidates the carboxyl end of the polyketide with L-malic acid. Because traA lacks a designated enoylreductase (ER) domain, the required activity is provided the enoyl reductase traG. Crustosic acid undergoes decarboxylation and isomerization to the terrestric acid, catalyzed by the 2-oxoglutarate-dependent dioxygenase traH. Both acids are further converted to the 2 gamma-butyrolactones (R)-5-methyltetronic acid and (S)-5-carboxylmethyltetronic acid, with involvement of the cytochrome P450 monooxygenase claJ. Spontaneous addition of the methide to these gamma-butyrolactones leads to peniphenone D and penilactone D, which undergo again stereospecific attacking by methide to give penilactones A and B. The function of the enoyl-CoA isomerase/hydratase claC has not been investigated yet. This chain is Enoyl-CoA isomerase/hydratase claC, found in Penicillium crustosum (Blue mold fungus).